A 396-amino-acid chain; its full sequence is Purine ribonucleoside efflux pump NepI (396 aa).

The Cytoplasmic segment spans residues M1–A21. Residues V22 to L42 form a helical membrane-spanning segment. The Periplasmic portion of the chain corresponds to L43–E54. A helical membrane pass occupies residues G55 to I75. Over T76 to R85 the chain is Cytoplasmic. Residues Y86–N106 traverse the membrane as a helical segment. S107 is a topological domain (periplasmic). Residues F108–M128 traverse the membrane as a helical segment. The Cytoplasmic portion of the chain corresponds to S129 to S147. A helical membrane pass occupies residues V148 to G168. The Periplasmic portion of the chain corresponds to E169–N175. The chain crosses the membrane as a helical span at residues V176 to P196. Residues S197–R215 are Cytoplasmic-facing. Residues P216–F236 traverse the membrane as a helical segment. At T237 to T255 the chain is on the periplasmic side. Residues L256–L276 traverse the membrane as a helical segment. Residues K277 to K281 lie on the Cytoplasmic side of the membrane. A helical transmembrane segment spans residues L282–G302. Topologically, residues S303–K305 are periplasmic. The helical transmembrane segment at I306–W326 threads the bilayer. Residues S327–S343 are Cytoplasmic-facing. A helical transmembrane segment spans residues I344–L364. Residues D365–N366 are Periplasmic-facing. The chain crosses the membrane as a helical span at residues I367–V387. At T388–S396 the chain is on the cytoplasmic side.

The protein belongs to the major facilitator superfamily. DHA1 family. NepI (TC 2.A.1.2.26) subfamily.

It localises to the cell inner membrane. It catalyses the reaction inosine(in) + H(+)(out) = inosine(out) + H(+)(in). It carries out the reaction guanosine(in) + H(+)(out) = guanosine(out) + H(+)(in). Involved in the efflux of purine ribonucleosides, such as inosine and guanosine. The sequence is that of Purine ribonucleoside efflux pump NepI from Escherichia coli O157:H7.